We begin with the raw amino-acid sequence, 590 residues long: Beta-glucosidase 29 (590 aa).

The signal sequence occupies residues 1–21; sequence MNVQIFILLLIISWLTPKITS. A beta-D-glucoside-binding positions include Q48, H151, and 196–197; that span reads NE. Catalysis depends on E197, which acts as the Proton donor. A disulfide bridge connects residues C216 and C224. 2 N-linked (GlcNAc...) asparagine glycosylation sites follow: N255 and N331. Residue Y341 coordinates a beta-D-glucoside. N-linked (GlcNAc...) asparagine glycosylation occurs at N371. Residues E413, W463, 470 to 471, and F479 contribute to the a beta-D-glucoside site; that span reads EW. The active-site Nucleophile is the E413. Residues N522 and N553 are each glycosylated (N-linked (GlcNAc...) asparagine).

The protein belongs to the glycosyl hydrolase 1 family.

It catalyses the reaction Hydrolysis of terminal, non-reducing beta-D-glucosyl residues with release of beta-D-glucose.. The polypeptide is Beta-glucosidase 29 (Arabidopsis thaliana (Mouse-ear cress)).